The sequence spans 525 residues: Beta-1,4-xylosyltransferase IRX14 (525 aa).

Residues 1–35 (MKLSALHQSYLNRRSNSFRSPTSLDSSVDGSGKSL) are Cytoplasmic-facing. The chain crosses the membrane as a helical; Signal-anchor for type II membrane protein span at residues 36 to 56 (IAVFWLILHCLCCLISLVLGF). Residues 57 to 525 (RFSRLVFFFL…SSSSKHQERN (469 aa)) lie on the Lumenal side of the membrane. 3 N-linked (GlcNAc...) asparagine glycosylation sites follow: Asn-102, Asn-204, and Asn-326. Residues 452 to 525 (RTPWPDVPPE…SSSSKHQERN (74 aa)) form a disordered region. Residues 471–488 (PLSQGNTVVVIPKQQQHP) show a composition bias toward polar residues. The span at 489–503 (TKIRKPKRKSKKSKH) shows a compositional bias: basic residues. The span at 508–519 (TDTTTQVYSSSS) shows a compositional bias: polar residues.

Belongs to the glycosyltransferase 43 family. In terms of tissue distribution, expressed in developing interfascicular fibers and xylem cells in stems and developing secondary xylem in roots.

It localises to the golgi apparatus membrane. It carries out the reaction [(1-&gt;4)-beta-D-xylan](n) + UDP-alpha-D-xylose = [(1-&gt;4)-beta-D-xylan](n+1) + UDP + H(+). Its function is as follows. Involved in the synthesis of the hemicellulose glucuronoxylan, a major component of secondary cell walls. Involved in the elongation of glucuronoxylan xylosyl backbone. Xylan xylosyltransferase that acts cooperatively with IRX9 to achieve the successive addition of xylosyl residues during xylan backbone elongation. Required for the proper composition and structural properties of released seed coat mucilage. Required for the production of highly branched xylan polymers in seed coat mucilage. Xylan with xylose side chains seems to be necessary for pectin attachment to the seed surface. Together with MUCI70, required for xylan and pectin synthesis in seed coat epidermal (SCE) cells. This Arabidopsis thaliana (Mouse-ear cress) protein is Beta-1,4-xylosyltransferase IRX14.